A 161-amino-acid polypeptide reads, in one-letter code: Cytidylate kinase (161 aa).

Residue 7 to 15 coordinates ATP; the sequence is GLAGTGTTT.

It belongs to the cytidylate kinase family. Type 2 subfamily.

The protein localises to the cytoplasm. The enzyme catalyses CMP + ATP = CDP + ADP. It catalyses the reaction dCMP + ATP = dCDP + ADP. This chain is Cytidylate kinase (cmk), found in Methanothermobacter thermautotrophicus (strain ATCC 29096 / DSM 1053 / JCM 10044 / NBRC 100330 / Delta H) (Methanobacterium thermoautotrophicum).